Reading from the N-terminus, the 236-residue chain is Mammalian ependymin-related protein 1 (236 aa).

The signal sequence occupies residues methionine 1–methionine 35. 3 cysteine pairs are disulfide-bonded: cysteine 54–cysteine 184, cysteine 100–cysteine 234, and cysteine 125–cysteine 222. Residues asparagine 142 and asparagine 194 are each glycosylated (N-linked (GlcNAc...) asparagine).

This sequence belongs to the ependymin family. Homodimer. N-glycosylated; the glycan contains mannose-6-phosphate moieties.

The protein resides in the lysosome lumen. It localises to the secreted. In terms of biological role, binds anionic lipids and gangliosides at acidic pH. This chain is Mammalian ependymin-related protein 1 (EPDR1), found in Bos taurus (Bovine).